Consider the following 646-residue polypeptide: MAQISLTFPDGKAREFPAGITPAEVAASISTSLGKKAISASVDGRHYDLQWPIETDAKIAIHTMADEAQALELIRHDLAHIMARAVQELWPDVKVTIGPVVANGWYYDFDREETFTPEDLGAIEKRMKEIINAREAVKTELWERARAIGYYEERGEPFKVELVQAIPEDQSIRMYWHGGWQDLCRGPHLQHTGQVPADAFKLMSVAGAYWRGDSANKQLQRIYGVAFKTRDELKAYLHMLEEAAKRDHRKLGREMELFHLQEEAPGMVFWHPNGWQIYRTLEDYMRGRLRQAGYKEIRTPQVVDRKLWEASGHWEAYKENMFIVEVEEEHAKEKRINALKPMNCPCHVQVYNQGLKSYRDLPLRLAEFGSCHRYESSGSMHGLMRVRGFVQDDAHIFCTEDQIESECAAFIELLSSVYKDLGFDSFEIKLSTRPEVRIGSDEAWDKVETALENAIRKVGAAYEIDPGEGAFYGPKLDFKLTDAIGRKWQCGTFQVDPNLPTRLGAEYIGEDGAKHRPYMLHRAILGSFERFIGILIENYAGKLPFWLAPRQVVVASIVSDADPYVAEVVAALRARGVRAEADTRNEKINYKVREHSVGKVPVILAIGMQEVEARSVSVRRLGETRTESMGLDQVVDQLAADARIPG.

Residues 1–63 form the TGS domain; sequence MAQISLTFPD…ETDAKIAIHT (63 aa). The catalytic stretch occupies residues 247–544; the sequence is DHRKLGREME…LIENYAGKLP (298 aa). Cys-344, His-395, and His-521 together coordinate Zn(2+).

The protein belongs to the class-II aminoacyl-tRNA synthetase family. In terms of assembly, homodimer. The cofactor is Zn(2+).

The protein localises to the cytoplasm. It catalyses the reaction tRNA(Thr) + L-threonine + ATP = L-threonyl-tRNA(Thr) + AMP + diphosphate + H(+). Functionally, catalyzes the attachment of threonine to tRNA(Thr) in a two-step reaction: L-threonine is first activated by ATP to form Thr-AMP and then transferred to the acceptor end of tRNA(Thr). Also edits incorrectly charged L-seryl-tRNA(Thr). The chain is Threonine--tRNA ligase from Cereibacter sphaeroides (strain ATCC 17029 / ATH 2.4.9) (Rhodobacter sphaeroides).